The primary structure comprises 387 residues: Guanylate kinase 1 (387 aa).

In terms of domain architecture, Guanylate kinase-like spans 137 to 319 (EKPIVISGPS…CYKKLKNLLG (183 aa)). 144–151 (GPSGVGKG) provides a ligand contact to ATP. Active-site residues include R177, R270, and R281. Positions 304 and 305 each coordinate ATP.

It belongs to the guanylate kinase family. As to quaternary structure, monomer.

It carries out the reaction GMP + ATP = GDP + ADP. Essential for recycling GMP and indirectly, cGMP. Required for normal development of the gametophyte and embryo, in association with GK2. The polypeptide is Guanylate kinase 1 (GK-1) (Arabidopsis thaliana (Mouse-ear cress)).